The chain runs to 397 residues: Tryptophan synthase beta chain (397 aa).

At lysine 90 the chain carries N6-(pyridoxal phosphate)lysine.

The protein belongs to the TrpB family. In terms of assembly, tetramer of two alpha and two beta chains. It depends on pyridoxal 5'-phosphate as a cofactor.

The enzyme catalyses (1S,2R)-1-C-(indol-3-yl)glycerol 3-phosphate + L-serine = D-glyceraldehyde 3-phosphate + L-tryptophan + H2O. It functions in the pathway amino-acid biosynthesis; L-tryptophan biosynthesis; L-tryptophan from chorismate: step 5/5. In terms of biological role, the beta subunit is responsible for the synthesis of L-tryptophan from indole and L-serine. The protein is Tryptophan synthase beta chain of Nitrosomonas europaea (strain ATCC 19718 / CIP 103999 / KCTC 2705 / NBRC 14298).